A 374-amino-acid polypeptide reads, in one-letter code: Tuliposide A-converting enzyme b3, amyloplastic (374 aa).

The N-terminal 68 residues, Met1–Thr68, are a transit peptide targeting the amyloplast. Residue Ser226 is the Acyl-ester intermediate of the active site. Active-site charge relay system residues include Asp316 and His348.

The protein belongs to the AB hydrolase superfamily. In terms of assembly, homodimer. As to expression, highly expressed in pistil and bulb scales. Lower expression in stem, and barely detected in root, leaf, petal and stamen.

It localises to the plastid. Its subcellular location is the amyloplast. It carries out the reaction 6-tuliposide A = tulipalin A + D-glucose. Functionally, lactone-forming carboxylesterases, specifically catalyzing intramolecular transesterification, but not hydrolysis. Involved in the biosynthesis of tulipalins, defensive chemicals that show antimicrobial activities against a broad range of strains of bacteria and fungi. Substrates are 6-tuliposide A &gt; 6-tuliposide B. This is Tuliposide A-converting enzyme b3, amyloplastic (TCEA-B3) from Tulipa gesneriana (Garden tulip).